A 208-amino-acid polypeptide reads, in one-letter code: Small ribosomal subunit protein uS4 (208 aa).

Positions 98–161 (QRLDNVVFRM…KSNPQVVRAL (64 aa)) constitute an S4 RNA-binding domain.

The protein belongs to the universal ribosomal protein uS4 family. In terms of assembly, part of the 30S ribosomal subunit. Contacts protein S5. The interaction surface between S4 and S5 is involved in control of translational fidelity.

In terms of biological role, one of the primary rRNA binding proteins, it binds directly to 16S rRNA where it nucleates assembly of the body of the 30S subunit. Its function is as follows. With S5 and S12 plays an important role in translational accuracy. The chain is Small ribosomal subunit protein uS4 from Aliarcobacter butzleri (strain RM4018) (Arcobacter butzleri).